The primary structure comprises 670 residues: DEAD-box ATP-dependent RNA helicase 16 (670 aa).

Residues 1-10 (MAAAAAASSM) show a composition bias toward low complexity. A disordered region spans residues 1–97 (MAAAAAASSM…EEREVSFDEL (97 aa)). Basic and acidic residues-rich tracts occupy residues 18–30 (AATE…HDEA) and 40–49 (NDGHTAHAAE). The Q motif signature appears at 92-120 (VSFDELGLDEQLKRALRKKGLDKATPIQR). The Helicase ATP-binding domain occupies 123–306 (IPLILEGKDV…KLLLHNPFIL (184 aa)). 136 to 143 (AKTGSGKT) provides a ligand contact to ATP. The DEAD box motif lies at 254–257 (DEAD). Residues 340 to 523 (LVLLKLELIQ…PFPLLTKNAV (184 aa)) form the Helicase C-terminal domain. The disordered stretch occupies residues 616 to 670 (DIDKPRRRKRMGFKGGSGRSSDPLKTFSAEGKSRRRGRKERDGEQDRRKRKKVES). Residues 654–670 (KERDGEQDRRKRKKVES) are compositionally biased toward basic and acidic residues.

The protein belongs to the DEAD box helicase family. DDX56/DBP9 subfamily.

It carries out the reaction ATP + H2O = ADP + phosphate + H(+). The chain is DEAD-box ATP-dependent RNA helicase 16 from Oryza sativa subsp. japonica (Rice).